The primary structure comprises 423 residues: Vitamin D3 receptor (423 aa).

The Zn(2+) site is built by cysteine 24, cysteine 27, cysteine 41, cysteine 44, cysteine 60, cysteine 66, cysteine 76, and cysteine 79. 2 NR C4-type zinc fingers span residues 24 to 44 and 60 to 84; these read CGVC…CEGC and CPFN…LKRC. Residues 24–89 constitute a DNA-binding region (nuclear receptor); the sequence is CGVCGDRATG…RLKRCVDIGM (66 aa). The interval 97-126 is hinge; the sequence is DEEVQRKREMIMKRKEEEALKDSLRPKLSE. Residues 127–419 form the NR LBD domain; sequence EQQHIIAILL…LTPLVLEVFG (293 aa). Position 143 (tyrosine 143) interacts with calcitriol. Residues 159–180 are disordered; it reads MDGSTGSYSPRPTLSFSGNSSS. Residues 171 to 180 show a composition bias toward low complexity; sequence TLSFSGNSSS. A calcitriol-binding site is contributed by serine 233. Residues 242–260 form an interaction with coactivator LXXLL motif region; sequence KMIPGFRDLTSDDQIVLLK. Positions 270, 274, 301, and 393 each coordinate calcitriol. Positions 412 to 420 match the 9aaTAD motif; that stretch reads PLVLEVFGN.

Belongs to the nuclear hormone receptor family. NR1 subfamily. In terms of assembly, homodimer in the absence of bound vitamin D3. Heterodimer with RXRA after vitamin D3 binding. Interacts with MED1 and NCOA6. Interacts with MED1, NCOA1, NCOA2, NCOA3 and NCOA6 coactivators, leading to a strong increase of transcription of target genes. Interacts with the corepressor NCOR1. Interacts with SNW1. Interacts with IRX4, the interaction does not affect its transactivation activity. Interacts with CRY1. Interacts with CRY2 in a ligand-dependent manner. Post-translationally, ubiquitinated by UBR5, leading to its degradation: UBR5 specifically recognizes and binds ligand-bound VDR when it is not associated with coactivators (NCOAs). In presence of NCOAs, the UBR5-degron is not accessible, preventing its ubiquitination and degradation. In terms of tissue distribution, detected in intestine and kidney.

Its subcellular location is the nucleus. It is found in the cytoplasm. Functionally, nuclear receptor for calcitriol, the active form of vitamin D3 which mediates the action of this vitamin on cells. Enters the nucleus upon vitamin D3 binding where it forms heterodimers with the retinoid X receptor/RXR. The VDR-RXR heterodimers bind to specific response elements on DNA and activate the transcription of vitamin D3-responsive target genes. Plays a central role in calcium homeostasis. Also functions as a receptor for the secondary bile acid lithocholic acid (LCA) and its metabolites. The sequence is that of Vitamin D3 receptor (Vdr) from Rattus norvegicus (Rat).